The following is a 516-amino-acid chain: Putative Rieske 2Fe-2S iron-sulfur protein MT3926 (516 aa).

Positions 429 to 516 constitute a Rieske domain; it reads LYTFFKCLTD…RGHQLRSSRP (88 aa). [2Fe-2S] cluster is bound by residues cysteine 469, histidine 471, cysteine 489, and histidine 492.

The cofactor is [2Fe-2S] cluster.

The protein is Putative Rieske 2Fe-2S iron-sulfur protein MT3926 of Mycobacterium tuberculosis (strain CDC 1551 / Oshkosh).